An 89-amino-acid chain; its full sequence is Microcin N (89 aa).

The N-terminal stretch at 1–15 is a signal peptide; sequence MRELDREELNCVGGA.

It belongs to the class IIa microcin family. Post-translationally, mass spectrometry suggests 3 of the 4 Met residues of the mature peptide are oxidized.

Its subcellular location is the secreted. In terms of biological role, active against E.coli and Salmonella, but not Listeria or Campylobacter. Channel-forming microcin. Probably neutralized by its immunity protein McnI. The protein is Microcin N of Escherichia coli.